Consider the following 84-residue polypeptide: uncharacterized protein (84 aa).

The next 3 helical transmembrane spans lie at 4-20, 27-49, and 59-81; these read AYVL…IKYG, VWKA…WIAF, and IGLA…VYVL.

It is found in the cell membrane. This is an uncharacterized protein from Archaeoglobus fulgidus (strain ATCC 49558 / DSM 4304 / JCM 9628 / NBRC 100126 / VC-16).